The primary structure comprises 248 residues: Transcription termination/antitermination protein NusG (248 aa).

In terms of domain architecture, KOW spans 197–227 (KGDQVRVIEGPFMNFTGTVEEVHPEKRKLTV).

It belongs to the NusG family. As to quaternary structure, monomer. Homodimer.

Functionally, participates in transcription elongation, termination and antitermination. This Aquifex aeolicus (strain VF5) protein is Transcription termination/antitermination protein NusG.